A 242-amino-acid polypeptide reads, in one-letter code: Small ribosomal subunit protein uS7m (242 aa).

The N-terminal 37 residues, 1 to 37 (MAAPTAKVSRGWSGLALGVRIAVLRLPGLTQVRWSRY), are a transit peptide targeting the mitochondrion. Lys228 carries the post-translational modification N6-acetyllysine.

This sequence belongs to the universal ribosomal protein uS7 family. Component of the mitochondrial ribosome small subunit (28S) which comprises a 12S rRNA and about 30 distinct proteins.

Its subcellular location is the mitochondrion. The sequence is that of Small ribosomal subunit protein uS7m (MRPS7) from Bos taurus (Bovine).